Reading from the N-terminus, the 489-residue chain is MARRNFKVLYVSGEVSPFVRISALADFMASFPQALEEEGFEARIMMPKYGTINDRKFRLHDVLRLSDIEVNLRDKTELLHVKVTALPSSKIQTYFLYNEKYFKRNGLFTDVHNGGDLKGNTEKVIFFNVGVLETLQRLGWKPDIIHCHDWYAGLLPLLLKTVYASNSFFSDVKTVLTVHNVYRQGILPFKVFQKLLPEEVSSALYRAGDNVNMLYTGAEHADLLTTTSRLYADEIVGNGSDTYGLGTVVEERKSTFHGILNGIDTRQWNPSTDKLIKKRYAADRLEGKLDNKKALLDEAGLPFTEGRPLAGIIIGFDAFQGAELLKESLVKLVELDMQLIICGSGDKEYEKYFQDFAAEYPEQVSVRTDYADTLLHLAIAGFDMLLMPGRIESCGMLQLFAMSYGTIPVAYAGGGIVETIDAVTDKSGSGFLFYDYTADAFAGKVQEALDLYHDEERWLQLVLEAMGKDFSWKNSAGEYDQLYRKLLEE.

Residue Arg-20 participates in ADP-alpha-D-glucose binding.

This sequence belongs to the glycosyltransferase 1 family. Bacterial/plant glycogen synthase subfamily.

It carries out the reaction [(1-&gt;4)-alpha-D-glucosyl](n) + ADP-alpha-D-glucose = [(1-&gt;4)-alpha-D-glucosyl](n+1) + ADP + H(+). Its pathway is glycan biosynthesis; glycogen biosynthesis. Synthesizes alpha-1,4-glucan chains using ADP-glucose. This is Glycogen synthase from Chlorobium limicola (strain DSM 245 / NBRC 103803 / 6330).